A 190-amino-acid polypeptide reads, in one-letter code: 3-isopropylmalate dehydratase small subunit (190 aa).

It belongs to the LeuD family. LeuD type 1 subfamily. In terms of assembly, heterodimer of LeuC and LeuD.

The catalysed reaction is (2R,3S)-3-isopropylmalate = (2S)-2-isopropylmalate. Its pathway is amino-acid biosynthesis; L-leucine biosynthesis; L-leucine from 3-methyl-2-oxobutanoate: step 2/4. In terms of biological role, catalyzes the isomerization between 2-isopropylmalate and 3-isopropylmalate, via the formation of 2-isopropylmaleate. The protein is 3-isopropylmalate dehydratase small subunit of Staphylococcus aureus (strain USA300).